A 271-amino-acid polypeptide reads, in one-letter code: Glutamate racemase (271 aa).

Substrate is bound by residues 10–11 (DS) and 42–43 (YG). Cys73 (proton donor/acceptor) is an active-site residue. A substrate-binding site is contributed by 74-75 (NT). Cys183 serves as the catalytic Proton donor/acceptor. 184–185 (TH) provides a ligand contact to substrate.

Belongs to the aspartate/glutamate racemases family.

It carries out the reaction L-glutamate = D-glutamate. Its pathway is cell wall biogenesis; peptidoglycan biosynthesis. Its function is as follows. Provides the (R)-glutamate required for cell wall biosynthesis. The protein is Glutamate racemase of Lactococcus lactis subsp. cremoris (strain SK11).